The following is a 233-amino-acid chain: Orotidine 5'-phosphate decarboxylase (233 aa).

Residues D12, K34, 61-70 (DLKFHDIPNT), T120, R181, Q190, G210, and R211 each bind substrate. Catalysis depends on K63, which acts as the Proton donor.

Belongs to the OMP decarboxylase family. Type 1 subfamily. In terms of assembly, homodimer.

It carries out the reaction orotidine 5'-phosphate + H(+) = UMP + CO2. It functions in the pathway pyrimidine metabolism; UMP biosynthesis via de novo pathway; UMP from orotate: step 2/2. Its function is as follows. Catalyzes the decarboxylation of orotidine 5'-monophosphate (OMP) to uridine 5'-monophosphate (UMP). The polypeptide is Orotidine 5'-phosphate decarboxylase (Hahella chejuensis (strain KCTC 2396)).